Reading from the N-terminus, the 250-residue chain is Pyrroloquinoline-quinone synthase (250 aa).

Belongs to the PqqC family.

The catalysed reaction is 6-(2-amino-2-carboxyethyl)-7,8-dioxo-1,2,3,4,7,8-hexahydroquinoline-2,4-dicarboxylate + 3 O2 = pyrroloquinoline quinone + 2 H2O2 + 2 H2O + H(+). It functions in the pathway cofactor biosynthesis; pyrroloquinoline quinone biosynthesis. Functionally, ring cyclization and eight-electron oxidation of 3a-(2-amino-2-carboxyethyl)-4,5-dioxo-4,5,6,7,8,9-hexahydroquinoline-7,9-dicarboxylic-acid to PQQ. This is Pyrroloquinoline-quinone synthase from Ectopseudomonas mendocina (strain ymp) (Pseudomonas mendocina).